Reading from the N-terminus, the 478-residue chain is Ribosomal RNA small subunit methyltransferase F (478 aa).

S-adenosyl-L-methionine contacts are provided by residues 123–129 (AAAPGSK), E147, D174, and D192. The active-site Nucleophile is the C245.

This sequence belongs to the class I-like SAM-binding methyltransferase superfamily. RsmB/NOP family.

The protein resides in the cytoplasm. It carries out the reaction cytidine(1407) in 16S rRNA + S-adenosyl-L-methionine = 5-methylcytidine(1407) in 16S rRNA + S-adenosyl-L-homocysteine + H(+). Specifically methylates the cytosine at position 1407 (m5C1407) of 16S rRNA. The chain is Ribosomal RNA small subunit methyltransferase F from Vibrio parahaemolyticus serotype O3:K6 (strain RIMD 2210633).